Reading from the N-terminus, the 193-residue chain is Ion-translocating oxidoreductase complex subunit B (193 aa).

The segment at 1–26 (MSTMLIAVILLTLLALFFGVLLGFAA) is hydrophobic. Positions 32-90 (EGNPIVDELEAILPQTQCGQCGYPGCRPYAEAIANGDKVNKCPPGGTATMEKLASLMGV) constitute a 4Fe-4S domain. The [4Fe-4S] cluster site is built by cysteine 49, cysteine 52, cysteine 57, cysteine 73, cysteine 114, cysteine 117, cysteine 120, cysteine 124, cysteine 144, cysteine 147, cysteine 150, and cysteine 154. 4Fe-4S ferredoxin-type domains are found at residues 105–134 (KVAYIREDECIGCTKCIQACPVDAIIGAGK) and 136–164 (MHTVLTADCTGCDLCVEPCPVDCIDMIPV).

Belongs to the 4Fe4S bacterial-type ferredoxin family. RnfB subfamily. The complex is composed of six subunits: RnfA, RnfB, RnfC, RnfD, RnfE and RnfG. Requires [4Fe-4S] cluster as cofactor.

Its subcellular location is the cell inner membrane. In terms of biological role, part of a membrane-bound complex that couples electron transfer with translocation of ions across the membrane. This Shewanella sp. (strain MR-7) protein is Ion-translocating oxidoreductase complex subunit B.